Reading from the N-terminus, the 329-residue chain is Interleukin-12 subunit beta (329 aa).

An N-terminal signal peptide occupies residues 1–22 (MHPQQLVIAWLSLVLLAPPLMA). The region spanning 23-106 (IWELEKNVYV…LSHSFLLIHK (84 aa)) is the Ig-like C2-type domain. Cys50 and Cys90 are oxidised to a cystine. 2 N-linked (GlcNAc...) asparagine glycosylation sites follow: Asn135 and Asn223. The region spanning 238–329 (PPKNLQLKPL…WSNWASVSCS (92 aa)) is the Fibronectin type-III domain.

This sequence belongs to the IL-12B family. In terms of assembly, heterodimer with IL12A; disulfide-linked. The heterodimer is known as interleukin IL-12. Heterodimer with IL23A; disulfide-linked. The heterodimer is known as interleukin IL-23. Also secreted as a monomer. Interacts with NBR1; this interaction promotes IL-12 secretion.

Its subcellular location is the secreted. Cytokine that can act as a growth factor for activated T and NK cells, enhance the lytic activity of NK/lymphokine-activated killer cells, and stimulate the production of IFN-gamma by resting PBMC. Functionally, associates with IL23A to form the IL-23 interleukin, a heterodimeric cytokine which functions in innate and adaptive immunity. IL-23 may constitute with IL-17 an acute response to infection in peripheral tissues. IL-23 binds to a heterodimeric receptor complex composed of IL12RB1 and IL23R, activates the Jak-Stat signaling cascade, stimulates memory rather than naive T-cells and promotes production of pro-inflammatory cytokines. IL-23 induces autoimmune inflammation and thus may be responsible for autoimmune inflammatory diseases and may be important for tumorigenesis. This Felis catus (Cat) protein is Interleukin-12 subunit beta (IL12B).